Here is an 874-residue protein sequence, read N- to C-terminus: S-layer protein (874 aa).

Positions 1 to 30 (MAKTNSYKKVIAGTMTAAMVAGVVSPVAAA) are cleaved as a signal peptide. SLH domains lie at 31–93 (GKSF…NAQP), 94–151 (SFKD…KVDG), and 152–214 (TLVT…ENSD).

The protein resides in the secreted. Its subcellular location is the cell wall. It is found in the S-layer. In terms of biological role, the S-layer is a paracrystalline mono-layered assembly of proteins which coat the surface of bacteria. This Bacillus licheniformis protein is S-layer protein.